We begin with the raw amino-acid sequence, 427 residues long: Glutamate-1-semialdehyde 2,1-aminomutase (427 aa).

N6-(pyridoxal phosphate)lysine is present on Lys-267.

Belongs to the class-III pyridoxal-phosphate-dependent aminotransferase family. HemL subfamily. As to quaternary structure, homodimer. The cofactor is pyridoxal 5'-phosphate.

It is found in the cytoplasm. It catalyses the reaction (S)-4-amino-5-oxopentanoate = 5-aminolevulinate. It functions in the pathway porphyrin-containing compound metabolism; protoporphyrin-IX biosynthesis; 5-aminolevulinate from L-glutamyl-tRNA(Glu): step 2/2. This Geobacter metallireducens (strain ATCC 53774 / DSM 7210 / GS-15) protein is Glutamate-1-semialdehyde 2,1-aminomutase.